The following is a 349-amino-acid chain: UDP-3-O-acylglucosamine N-acyltransferase (349 aa).

His246 (proton acceptor) is an active-site residue.

It belongs to the transferase hexapeptide repeat family. LpxD subfamily. In terms of assembly, homotrimer.

The catalysed reaction is a UDP-3-O-[(3R)-3-hydroxyacyl]-alpha-D-glucosamine + a (3R)-hydroxyacyl-[ACP] = a UDP-2-N,3-O-bis[(3R)-3-hydroxyacyl]-alpha-D-glucosamine + holo-[ACP] + H(+). It functions in the pathway bacterial outer membrane biogenesis; LPS lipid A biosynthesis. Catalyzes the N-acylation of UDP-3-O-acylglucosamine using 3-hydroxyacyl-ACP as the acyl donor. Is involved in the biosynthesis of lipid A, a phosphorylated glycolipid that anchors the lipopolysaccharide to the outer membrane of the cell. The protein is UDP-3-O-acylglucosamine N-acyltransferase of Protochlamydia amoebophila (strain UWE25).